Consider the following 423-residue polypeptide: Histidine--tRNA ligase (423 aa).

The protein belongs to the class-II aminoacyl-tRNA synthetase family. In terms of assembly, homodimer.

The protein resides in the cytoplasm. It carries out the reaction tRNA(His) + L-histidine + ATP = L-histidyl-tRNA(His) + AMP + diphosphate + H(+). The polypeptide is Histidine--tRNA ligase (Prochlorococcus marinus (strain MIT 9211)).